Here is a 110-residue protein sequence, read N- to C-terminus: Integration host factor subunit alpha (110 aa).

It belongs to the bacterial histone-like protein family. In terms of assembly, heterodimer of an alpha and a beta chain.

Its function is as follows. This protein is one of the two subunits of integration host factor, a specific DNA-binding protein that functions in genetic recombination as well as in transcriptional and translational control. This is Integration host factor subunit alpha from Bdellovibrio bacteriovorus (strain ATCC 15356 / DSM 50701 / NCIMB 9529 / HD100).